The following is a 549-amino-acid chain: Glucose-6-phosphate isomerase (549 aa).

N6-acetyllysine occurs at positions 80, 228, and 234. The active-site Proton donor is the Glu-355. Catalysis depends on residues His-386 and Lys-514.

The protein belongs to the GPI family.

Its subcellular location is the cytoplasm. It catalyses the reaction alpha-D-glucose 6-phosphate = beta-D-fructose 6-phosphate. Its pathway is carbohydrate biosynthesis; gluconeogenesis. It participates in carbohydrate degradation; glycolysis; D-glyceraldehyde 3-phosphate and glycerone phosphate from D-glucose: step 2/4. In terms of biological role, catalyzes the reversible isomerization of glucose-6-phosphate to fructose-6-phosphate. The chain is Glucose-6-phosphate isomerase from Escherichia coli (strain SMS-3-5 / SECEC).